Consider the following 310-residue polypeptide: Ribosomal RNA small subunit methyltransferase H (310 aa).

Residues 33–35 (AGH), Asp-53, Tyr-83, Asp-100, and Gln-107 contribute to the S-adenosyl-L-methionine site.

It belongs to the methyltransferase superfamily. RsmH family.

It is found in the cytoplasm. It carries out the reaction cytidine(1402) in 16S rRNA + S-adenosyl-L-methionine = N(4)-methylcytidine(1402) in 16S rRNA + S-adenosyl-L-homocysteine + H(+). In terms of biological role, specifically methylates the N4 position of cytidine in position 1402 (C1402) of 16S rRNA. The polypeptide is Ribosomal RNA small subunit methyltransferase H (Clostridium perfringens (strain ATCC 13124 / DSM 756 / JCM 1290 / NCIMB 6125 / NCTC 8237 / Type A)).